We begin with the raw amino-acid sequence, 166 residues long: Protein-export protein SecB (166 aa).

It belongs to the SecB family. As to quaternary structure, homotetramer, a dimer of dimers. One homotetramer interacts with 1 SecA dimer.

It is found in the cytoplasm. One of the proteins required for the normal export of preproteins out of the cell cytoplasm. It is a molecular chaperone that binds to a subset of precursor proteins, maintaining them in a translocation-competent state. It also specifically binds to its receptor SecA. The protein is Protein-export protein SecB of Acidiphilium cryptum (strain JF-5).